A 475-amino-acid chain; its full sequence is Exodeoxyribonuclease 7 large subunit (475 aa).

The disordered stretch occupies residues 452 to 475 (DHGLNRSSKSKRIKSKQDDQGTLF). The segment covering 466-475 (SKQDDQGTLF) has biased composition (basic and acidic residues).

Belongs to the XseA family. As to quaternary structure, heterooligomer composed of large and small subunits.

The protein resides in the cytoplasm. It carries out the reaction Exonucleolytic cleavage in either 5'- to 3'- or 3'- to 5'-direction to yield nucleoside 5'-phosphates.. Functionally, bidirectionally degrades single-stranded DNA into large acid-insoluble oligonucleotides, which are then degraded further into small acid-soluble oligonucleotides. This chain is Exodeoxyribonuclease 7 large subunit, found in Bartonella quintana (strain Toulouse) (Rochalimaea quintana).